Reading from the N-terminus, the 209-residue chain is ATP synthase subunit O, mitochondrial (209 aa).

It belongs to the ATPase delta chain family. In terms of assembly, F-type ATPases have 2 components, CF(1) - the catalytic core - and CF(0) - the membrane proton channel. CF(1) has five subunits: alpha(3), beta(3), gamma(1), delta(1), epsilon(1). CF(0) has three main subunits: a, b and c.

It localises to the mitochondrion. Its subcellular location is the mitochondrion inner membrane. Its function is as follows. Mitochondrial membrane ATP synthase (F(1)F(0) ATP synthase or Complex V) produces ATP from ADP in the presence of a proton gradient across the membrane which is generated by electron transport complexes of the respiratory chain. F-type ATPases consist of two structural domains, F(1) - containing the extramembraneous catalytic core and F(0) - containing the membrane proton channel, linked together by a central stalk and a peripheral stalk. During catalysis, ATP synthesis in the catalytic domain of F(1) is coupled via a rotary mechanism of the central stalk subunits to proton translocation. Part of the complex F(0) domain and the peripheric stalk, which acts as a stator to hold the catalytic alpha(3)beta(3) subcomplex and subunit a/ATP6 static relative to the rotary elements. This chain is ATP synthase subunit O, mitochondrial, found in Drosophila melanogaster (Fruit fly).